We begin with the raw amino-acid sequence, 559 residues long: NXPE family member 3 (559 aa).

Residues 1–30 (MWINFVKLRLFCCLLAVLMVVVLVVNVTQV) form the signal peptide. N-linked (GlcNAc...) asparagine glycans are attached at residues N26, N237, and N346.

It belongs to the NXPE family.

It is found in the secreted. The chain is NXPE family member 3 (NXPE3) from Bos taurus (Bovine).